The chain runs to 942 residues: Leucine--tRNA ligase 2 (942 aa).

The short motif at 35–45 (PYPNSPFHLGH) is the 'HIGH' region element. The short motif at 619 to 623 (KMSKS) is the 'KMSKS' region element. Residue lysine 622 coordinates ATP.

It belongs to the class-I aminoacyl-tRNA synthetase family.

It localises to the cytoplasm. It carries out the reaction tRNA(Leu) + L-leucine + ATP = L-leucyl-tRNA(Leu) + AMP + diphosphate. The polypeptide is Leucine--tRNA ligase 2 (Sulfolobus acidocaldarius (strain ATCC 33909 / DSM 639 / JCM 8929 / NBRC 15157 / NCIMB 11770)).